A 157-amino-acid polypeptide reads, in one-letter code: Phosphopantetheine adenylyltransferase (157 aa).

Substrate is bound at residue Thr-10. Residues 10 to 11 (TF) and His-18 contribute to the ATP site. Substrate is bound by residues Lys-42, Leu-74, and Arg-88. Residues 89–91 (GLR), Glu-99, and 124–130 (NAFISSS) each bind ATP.

The protein belongs to the bacterial CoaD family. Homohexamer. The cofactor is Mg(2+).

It is found in the cytoplasm. The enzyme catalyses (R)-4'-phosphopantetheine + ATP + H(+) = 3'-dephospho-CoA + diphosphate. Its pathway is cofactor biosynthesis; coenzyme A biosynthesis; CoA from (R)-pantothenate: step 4/5. Tightly binds to CoA, which is presumably a feedback inhibitor. Potently inhibited by D-amethopterin, which simultaneously occupies the 4'-phosphopantetheine- and ATP-binding sites; following treatment with D-amethopterin, H.pylori exhibits morphological characteristics associated with cell death, showing that D-amethopterin displays antimicrobial activity. In terms of biological role, reversibly transfers an adenylyl group from ATP to 4'-phosphopantetheine, yielding dephospho-CoA (dPCoA) and pyrophosphate. This is Phosphopantetheine adenylyltransferase from Helicobacter pylori (strain ATCC 700392 / 26695) (Campylobacter pylori).